Here is an 813-residue protein sequence, read N- to C-terminus: Leucine--tRNA ligase (813 aa).

The 'HIGH' region signature appears at 41–51; that stretch reads PYPSGTLHMGH. Residues 575–579 carry the 'KMSKS' region motif; that stretch reads KMSKS. K578 contributes to the ATP binding site.

The protein belongs to the class-I aminoacyl-tRNA synthetase family.

Its subcellular location is the cytoplasm. It catalyses the reaction tRNA(Leu) + L-leucine + ATP = L-leucyl-tRNA(Leu) + AMP + diphosphate. This Francisella philomiragia subsp. philomiragia (strain ATCC 25017 / CCUG 19701 / FSC 153 / O#319-036) protein is Leucine--tRNA ligase.